Reading from the N-terminus, the 59-residue chain is Large ribosomal subunit protein bL35 (59 aa).

2 disordered regions span residues 1–22 (MKVKSAAKKRFKLTKSGQIKRK) and 30–49 (APHKTTKQKRHLRKQGTVSA). Residues 30-43 (APHKTTKQKRHLRK) show a composition bias toward basic residues.

Belongs to the bacterial ribosomal protein bL35 family.

In Mycoplasma pneumoniae (strain ATCC 29342 / M129 / Subtype 1) (Mycoplasmoides pneumoniae), this protein is Large ribosomal subunit protein bL35 (rpmI).